A 442-amino-acid chain; its full sequence is tRNA modification GTPase MnmE (442 aa).

The (6S)-5-formyl-5,6,7,8-tetrahydrofolate site is built by Arg21, Glu79, and Lys118. Residues Gly214–Asn367 form the TrmE-type G domain. K(+) is bound at residue Asn224. GTP is bound by residues Asn224–Ser229, Ser243–Thr249, and Asp268–Gly271. Ser228 is a binding site for Mg(2+). Ser243, Ile245, and Thr248 together coordinate K(+). Residue Thr249 participates in Mg(2+) binding. A (6S)-5-formyl-5,6,7,8-tetrahydrofolate-binding site is contributed by Lys442.

Belongs to the TRAFAC class TrmE-Era-EngA-EngB-Septin-like GTPase superfamily. TrmE GTPase family. Homodimer. Heterotetramer of two MnmE and two MnmG subunits. Requires K(+) as cofactor.

The protein resides in the cytoplasm. Functionally, exhibits a very high intrinsic GTPase hydrolysis rate. Involved in the addition of a carboxymethylaminomethyl (cmnm) group at the wobble position (U34) of certain tRNAs, forming tRNA-cmnm(5)s(2)U34. In Campylobacter jejuni subsp. doylei (strain ATCC BAA-1458 / RM4099 / 269.97), this protein is tRNA modification GTPase MnmE.